Reading from the N-terminus, the 97-residue chain is Co-chaperonin GroES (97 aa).

It belongs to the GroES chaperonin family. In terms of assembly, heptamer of 7 subunits arranged in a ring. Interacts with the chaperonin GroEL.

The protein resides in the cytoplasm. Functionally, together with the chaperonin GroEL, plays an essential role in assisting protein folding. The GroEL-GroES system forms a nano-cage that allows encapsulation of the non-native substrate proteins and provides a physical environment optimized to promote and accelerate protein folding. GroES binds to the apical surface of the GroEL ring, thereby capping the opening of the GroEL channel. The polypeptide is Co-chaperonin GroES (Pectobacterium atrosepticum (strain SCRI 1043 / ATCC BAA-672) (Erwinia carotovora subsp. atroseptica)).